The chain runs to 1509 residues: Putative endo-alpha-N-acetylgalactosaminidase (1509 aa).

An N-terminal signal peptide occupies residues 1–41 (MPFRGRRRQSALRGLSLAATFCLAAGSSGISGALFATPAQA). 5 residues coordinate Ca(2+): aspartate 288, asparagine 290, aspartate 292, lysine 294, and aspartate 299. The tract at residues 313 to 585 (GGDDVKNRVV…NLPVKFLQQQ (273 aa)) is catalytic. Substrate is bound at residue aspartate 369. The active-site Nucleophile is the aspartate 472. Glutamate 498 (proton donor/acceptor) is an active-site residue. Ca(2+) is bound by residues asparagine 878, glutamate 880, aspartate 926, and tyrosine 929. Disordered regions lie at residues 1176 to 1197 (NGWG…DGPP) and 1403 to 1439 (IKAA…SGGG). Over residues 1407-1428 (NPNPGTGSNPGTGSNPGTDPGT) the composition is skewed to low complexity. The span at 1429 to 1439 (GSAGGNSSGGG) shows a compositional bias: gly residues. Residues 1475-1479 (LAETG) carry the LPXTG sorting signal motif. Residue threonine 1478 is modified to Pentaglycyl murein peptidoglycan amidated threonine. Positions 1479-1509 (GFSGLVLPLGIGLMLLLIGAAAIIVRRHRHS) are cleaved as a propeptide — removed by sortase.

Belongs to the glycosyl hydrolase 101 family. A subfamily.

The protein localises to the secreted. The protein resides in the cell wall. The enzyme catalyses a 3-O-[beta-D-galactosyl-(1-&gt;3)-N-acetyl-alpha-D-galactosaminyl]-L-threonyl-[protein] + H2O = beta-D-galactosyl-(1-&gt;3)-N-acetyl-D-galactosamine + L-threonyl-[protein]. It catalyses the reaction a 3-O-[beta-D-galactosyl-(1-&gt;3)-N-acetyl-alpha-D-galactosaminyl]-L-seryl-[protein] + H2O = beta-D-galactosyl-(1-&gt;3)-N-acetyl-D-galactosamine + L-seryl-[protein]. Its function is as follows. Probably involved in the breakdown of mucin-type O-linked glycans. Specifically removes the T-antigen disaccharide (Gal-beta-1,3-GalNAc-alpha) from extracellular host glycoproteins. This Renibacterium salmoninarum (strain ATCC 33209 / DSM 20767 / JCM 11484 / NBRC 15589 / NCIMB 2235) protein is Putative endo-alpha-N-acetylgalactosaminidase.